Consider the following 244-residue polypeptide: Mitochondrial import inner membrane translocase subunit Tim21 (244 aa).

A mitochondrion-targeting transit peptide spans 1–18 (MICAFLRVVQHAEKLHGS). A disordered region spans residues 65-96 (TQGPDPRKAKEDSTKQVSIRRNQREETGVSMS). The segment covering 69 to 78 (DPRKAKEDST) has biased composition (basic and acidic residues). A helical transmembrane segment spans residues 107–127 (SYLIVVLFGVGLTGGLLYAIF).

This sequence belongs to the TIM21 family. As to quaternary structure, component of the TIM23 complex. Component of the MITRAC (mitochondrial translation regulation assembly intermediate of cytochrome c oxidase complex) complex, the core components of this complex being COA3/MITRAC12 and COX14. Interacts with COA3 and MT-CO1/COX1.

The protein localises to the mitochondrion membrane. Its function is as follows. Participates in the translocation of transit peptide-containing proteins across the mitochondrial inner membrane. Also required for assembly of mitochondrial respiratory chain complex I and complex IV as component of the MITRAC (mitochondrial translation regulation assembly intermediate of cytochrome c oxidase complex) complex. Probably shuttles between the presequence translocase and respiratory-chain assembly intermediates in a process that promotes incorporation of early nuclear-encoded subunits into these complexes. The sequence is that of Mitochondrial import inner membrane translocase subunit Tim21 (Timm21) from Mus musculus (Mouse).